An 87-amino-acid polypeptide reads, in one-letter code: Developmentally-regulated ectodermal protein (87 aa).

The first 16 residues, 1–16 (MKRLLVLTLVSAILMA), serve as a signal peptide directing secretion.

This chain is Developmentally-regulated ectodermal protein, found in Tripneustes gratilla (Hawaian sea urchin).